The chain runs to 173 residues: MNDLRYPIGQFTYKRPITEEMIDTWIQEIEDLPNELTKAIKDLDQKQLDTPYRVGGWTVRQVVHHVVDSHMNSYIRFKLALTEKNPTIKPYKEEKWAELPDSKLPVDVSLVMLDSLHKRWVNLLYSLEIEDLEKTFNHPETGETKLAVAIGLYAWHGRHHTAHITSLRKRLNW.

3 residues coordinate Zn(2+): His65, His156, and His160.

It belongs to the metal hydrolase YfiT family. Homodimer. Zn(2+) serves as cofactor.

Its subcellular location is the cytoplasm. In terms of biological role, possible metal-dependent hydrolase. The sequence is that of Putative metal-dependent hydrolase BC_2708 from Bacillus cereus (strain ATCC 14579 / DSM 31 / CCUG 7414 / JCM 2152 / NBRC 15305 / NCIMB 9373 / NCTC 2599 / NRRL B-3711).